The primary structure comprises 333 residues: Fructose-1,6-bisphosphatase class 1 1 (333 aa).

Residues Glu-81, Asp-100, Leu-102, and Asp-103 each coordinate Mg(2+). Residues 103-106 (DGSS) and Asn-191 contribute to the substrate site. Glu-263 lines the Mg(2+) pocket.

It belongs to the FBPase class 1 family. Homotetramer. Mg(2+) serves as cofactor.

It localises to the cytoplasm. The enzyme catalyses beta-D-fructose 1,6-bisphosphate + H2O = beta-D-fructose 6-phosphate + phosphate. Its pathway is carbohydrate biosynthesis; Calvin cycle. In Cereibacter sphaeroides (strain ATCC 17023 / DSM 158 / JCM 6121 / CCUG 31486 / LMG 2827 / NBRC 12203 / NCIMB 8253 / ATH 2.4.1.) (Rhodobacter sphaeroides), this protein is Fructose-1,6-bisphosphatase class 1 1.